Consider the following 406-residue polypeptide: Putative odorant receptor 65b (406 aa).

Residues 1-55 are Cytoplasmic-facing; it reads MDIQRFLKFYKVGWKTYRDPLMEASHSSIYYWREQMKAMALFTTTEERLLPYRSK. A helical transmembrane segment spans residues 56 to 76; sequence WHTLVYIQMVIFFASMSFGLT. The Extracellular segment spans residues 77 to 88; that stretch reads ESMGDHVQMGRD. Residues 89-109 traverse the membrane as a helical segment; sequence LAFILGAFFIIFKTYYFCWYG. Over 110-144 the chain is Cytoplasmic; sequence DELDQVISDLDALHPWAQKGPNPVEYQTGKRWYFV. Residues 145 to 165 form a helical membrane-spanning segment; that stretch reads MAFFLATSWSFFLCILLLLLI. At 166 to 218 the chain is on the extracellular side; that stretch reads TSPMWVHQQNLPFHAAFPFQWHEKSLHPISHAIIYLFQSYFAVYCLTWLLCIE. The chain crosses the membrane as a helical span at residues 219–239; sequence GLSICIYAEITFGIEVLCLEL. At 240-275 the chain is on the cytoplasmic side; sequence RQIHRHNYGLQELRMETNRLVKLHQKIVEILDRTND. The chain crosses the membrane as a helical span at residues 276–296; that stretch reads VFHGTLIMQMGVNFSLVSLSV. The Extracellular portion of the chain corresponds to 297 to 307; the sequence is LEAVEARKDPK. A helical transmembrane segment spans residues 308-328; sequence VVAQFAVLMLLALGHLSMWSY. Residues 329–381 are Cytoplasmic-facing; sequence CGDQLSQKSLQISEAAYEAYDPTKGSKDVYRDLCVIIRRGQDPLIMRASPFPS. The chain crosses the membrane as a helical span at residues 382–402; that stretch reads FNLINYSAILNQCYGILTFLL. Over 403 to 406 the chain is Extracellular; the sequence is KTLD.

The protein belongs to the insect chemoreceptor superfamily. Heteromeric odorant receptor channel (TC 1.A.69) family. Or49a subfamily. As to quaternary structure, interacts with Orco. Complexes exist early in the endomembrane system in olfactory sensory neurons (OSNs), coupling these complexes to the conserved ciliary trafficking pathway.

It localises to the cell membrane. In terms of biological role, odorant receptor which mediates acceptance or avoidance behavior, depending on its substrates. The odorant receptor repertoire encodes a large collection of odor stimuli that vary widely in identity, intensity, and duration. May form a complex with Orco to form odorant-sensing units, providing sensitive and prolonged odorant signaling and calcium permeability. This chain is Putative odorant receptor 65b (Or65b), found in Drosophila melanogaster (Fruit fly).